The chain runs to 286 residues: 4-diphosphocytidyl-2-C-methyl-D-erythritol kinase (286 aa).

Lysine 11 is a catalytic residue. 94–104 contributes to the ATP binding site; it reads PMGGGIGGGSS. Residue aspartate 136 is part of the active site.

The protein belongs to the GHMP kinase family. IspE subfamily.

It carries out the reaction 4-CDP-2-C-methyl-D-erythritol + ATP = 4-CDP-2-C-methyl-D-erythritol 2-phosphate + ADP + H(+). Its pathway is isoprenoid biosynthesis; isopentenyl diphosphate biosynthesis via DXP pathway; isopentenyl diphosphate from 1-deoxy-D-xylulose 5-phosphate: step 3/6. Functionally, catalyzes the phosphorylation of the position 2 hydroxy group of 4-diphosphocytidyl-2C-methyl-D-erythritol. This Pseudomonas putida (strain GB-1) protein is 4-diphosphocytidyl-2-C-methyl-D-erythritol kinase.